The chain runs to 240 residues: LexA repressor (240 aa).

A DNA-binding region (H-T-H motif) is located at residues 26–46 (FDEMKDALDLKSKSGIHRLIT). Residues S161 and K199 each act as for autocatalytic cleavage activity in the active site.

The protein belongs to the peptidase S24 family. Homodimer.

The catalysed reaction is Hydrolysis of Ala-|-Gly bond in repressor LexA.. Represses a number of genes involved in the response to DNA damage (SOS response), including recA and lexA. In the presence of single-stranded DNA, RecA interacts with LexA causing an autocatalytic cleavage which disrupts the DNA-binding part of LexA, leading to derepression of the SOS regulon and eventually DNA repair. The chain is LexA repressor from Methylobacterium nodulans (strain LMG 21967 / CNCM I-2342 / ORS 2060).